Here is a 430-residue protein sequence, read N- to C-terminus: Enolase (430 aa).

A (2R)-2-phosphoglycerate-binding site is contributed by Q162. E204 functions as the Proton donor in the catalytic mechanism. Mg(2+) contacts are provided by D242, E289, and D316. K341, R370, S371, and K392 together coordinate (2R)-2-phosphoglycerate. The Proton acceptor role is filled by K341.

This sequence belongs to the enolase family. Requires Mg(2+) as cofactor.

It is found in the cytoplasm. The protein localises to the secreted. It localises to the cell surface. It carries out the reaction (2R)-2-phosphoglycerate = phosphoenolpyruvate + H2O. Its pathway is carbohydrate degradation; glycolysis; pyruvate from D-glyceraldehyde 3-phosphate: step 4/5. Catalyzes the reversible conversion of 2-phosphoglycerate (2-PG) into phosphoenolpyruvate (PEP). It is essential for the degradation of carbohydrates via glycolysis. The chain is Enolase from Flavobacterium johnsoniae (strain ATCC 17061 / DSM 2064 / JCM 8514 / BCRC 14874 / CCUG 350202 / NBRC 14942 / NCIMB 11054 / UW101) (Cytophaga johnsonae).